Consider the following 147-residue polypeptide: Hemoglobin subunit beta-Y (147 aa).

Residues 3–147 (HFTAEEKAAI…VANALSLKYH (145 aa)) form the Globin domain. Heme b-binding residues include His-64 and His-93.

This sequence belongs to the globin family. In terms of assembly, heterotetramer of two alpha chains and two beta chains.

This is a minor early embryonic beta chain. The chain is Hemoglobin subunit beta-Y (HBBY) from Mesocricetus auratus (Golden hamster).